We begin with the raw amino-acid sequence, 694 residues long: Ubiquitin-like modifier-activating enzyme ATG7 (694 aa).

The GXGXXG motif signature appears at 370–375 (GAGTLG). Cys-550 acts as the Glycyl thioester intermediate in catalysis. The segment at 650-689 (ALQEKEYVAELSGLAEVQRRAEEMAAHVDWEEDDDLVDDG) is homodimerization.

It belongs to the ATG7 family. In terms of assembly, homodimer. Interacts with ATG8 through a thioester bond between Cys-550 and the C-terminal 'Gly-116' of ATG8 and with ATG12 through a thioester bond between Cys-550 and the C-terminal 'Gly-160' of ATG12. Also interacts with ATG3.

It localises to the cytoplasm. Its subcellular location is the preautophagosomal structure. In terms of biological role, E1-like activating enzyme involved in the 2 ubiquitin-like systems required for cytoplasm to vacuole transport (Cvt) and autophagy. Activates ATG12 for its conjugation with ATG5 and ATG8 for its conjugation with phosphatidylethanolamine. Both systems are needed for the ATG8 association to Cvt vesicles and autophagosomes membranes. Autophagy is essential for maintenance of amino acid levels and protein synthesis under nitrogen starvation. Required for selective autophagic degradation of the nucleus (nucleophagy) as well as for mitophagy which contributes to regulate mitochondrial quantity and quality by eliminating the mitochondria to a basal level to fulfill cellular energy requirements and preventing excess ROS production. Autophagy is required for proper vegetative growth, asexual/sexual reproduction, and full virulence. Autophagy is particularly involved in the biosynthesis of deoxynivalenol (DON), an important virulence determinant. The protein is Ubiquitin-like modifier-activating enzyme ATG7 of Gibberella zeae (strain ATCC MYA-4620 / CBS 123657 / FGSC 9075 / NRRL 31084 / PH-1) (Wheat head blight fungus).